The following is a 173-amino-acid chain: Translation initiation factor IF-3 (173 aa).

The protein belongs to the IF-3 family. In terms of assembly, monomer.

The protein resides in the cytoplasm. Its function is as follows. IF-3 binds to the 30S ribosomal subunit and shifts the equilibrium between 70S ribosomes and their 50S and 30S subunits in favor of the free subunits, thus enhancing the availability of 30S subunits on which protein synthesis initiation begins. The sequence is that of Translation initiation factor IF-3 from Campylobacter lari (strain RM2100 / D67 / ATCC BAA-1060).